A 109-amino-acid chain; its full sequence is Iron-sulfur cluster assembly protein CyaY (109 aa).

It belongs to the frataxin family.

Its function is as follows. Involved in iron-sulfur (Fe-S) cluster assembly. May act as a regulator of Fe-S biogenesis. The sequence is that of Iron-sulfur cluster assembly protein CyaY from Shewanella sp. (strain ANA-3).